Consider the following 107-residue polypeptide: Nucleoid-associated protein PPA0205 (107 aa).

The protein belongs to the YbaB/EbfC family. Homodimer.

The protein localises to the cytoplasm. Its subcellular location is the nucleoid. Functionally, binds to DNA and alters its conformation. May be involved in regulation of gene expression, nucleoid organization and DNA protection. This is Nucleoid-associated protein PPA0205 from Cutibacterium acnes (strain DSM 16379 / KPA171202) (Propionibacterium acnes).